The following is a 415-amino-acid chain: MSLEAIRFARSDPTNVQVSVLDQLLLPYLTKYLPIYTISDGYAVIKSMQVRGAPAIAIVGSLSILMESQMMLSNSFDQTQWFYDLLDWEDTRSKLTGRLDYLLSSRPTAVNLSNALKEIAQILKETNDLKQFNSELYNYVCKLIDEDLSNNIKMGDNGAKFLLESLSKEGFNEEFAVLTICNTGSLATSGYGTALGVIRSLWNDSKSKDPKVNTDGSLKPLASADSKMKHVFPLETRPYNQGSRLTAYELVHDEIPATLITDSSVTYRIKTSPYPIKAAFVGADRIVRNGDTANKIGTFQLAIICKQFGIKFFVVAPKTTIDNVTPNGDGIVVEERKPNEMKLVTGTLMNYDEETPALNVSNEPVSAKIGIAPSQINVWNPAFDITPHEFIDGIVTEEGVFTKDESGKFDLTSLF.

Asp284 serves as the catalytic Proton donor.

The protein belongs to the eIF-2B alpha/beta/delta subunits family. MtnA subfamily.

The protein localises to the cytoplasm. The protein resides in the nucleus. It carries out the reaction 5-(methylsulfanyl)-alpha-D-ribose 1-phosphate = 5-(methylsulfanyl)-D-ribulose 1-phosphate. It participates in amino-acid biosynthesis; L-methionine biosynthesis via salvage pathway; L-methionine from S-methyl-5-thio-alpha-D-ribose 1-phosphate: step 1/6. Functionally, catalyzes the interconversion of methylthioribose-1-phosphate (MTR-1-P) into methylthioribulose-1-phosphate (MTRu-1-P). This Vanderwaltozyma polyspora (strain ATCC 22028 / DSM 70294 / BCRC 21397 / CBS 2163 / NBRC 10782 / NRRL Y-8283 / UCD 57-17) (Kluyveromyces polysporus) protein is Methylthioribose-1-phosphate isomerase.